We begin with the raw amino-acid sequence, 380 residues long: Cytochrome b (380 aa).

The next 4 helical transmembrane spans lie at 34-54 (FGSL…LLAM), 78-99 (WLIR…FLHI), 114-134 (WNTG…GYVL), and 179-199 (FFAL…THLM). His84 and His98 together coordinate heme b. Residues His183 and His197 each contribute to the heme b site. His202 provides a ligand contact to a ubiquinone. A run of 4 helical transmembrane segments spans residues 227–247 (LKDI…ALFS), 289–309 (LGGV…PFLH), 321–341 (LSQA…WVGS), and 348–368 (FIII…ILFP).

It belongs to the cytochrome b family. As to quaternary structure, the cytochrome bc1 complex contains 11 subunits: 3 respiratory subunits (MT-CYB, CYC1 and UQCRFS1), 2 core proteins (UQCRC1 and UQCRC2) and 6 low-molecular weight proteins (UQCRH/QCR6, UQCRB/QCR7, UQCRQ/QCR8, UQCR10/QCR9, UQCR11/QCR10 and a cleavage product of UQCRFS1). This cytochrome bc1 complex then forms a dimer. Heme b is required as a cofactor.

Its subcellular location is the mitochondrion inner membrane. Functionally, component of the ubiquinol-cytochrome c reductase complex (complex III or cytochrome b-c1 complex) that is part of the mitochondrial respiratory chain. The b-c1 complex mediates electron transfer from ubiquinol to cytochrome c. Contributes to the generation of a proton gradient across the mitochondrial membrane that is then used for ATP synthesis. This is Cytochrome b (MT-CYB) from Syrmaticus reevesii (Reeves's pheasant).